Reading from the N-terminus, the 72-residue chain is Brevinin-2GHc (72 aa).

Residues 1–22 (MFTMKKSLLLLFFLGMISLSLC) form the signal peptide. Positions 23–42 (EQERGADEDEGEVEEQIKRS) are excised as a propeptide. An intrachain disulfide couples Cys64 to Cys70.

Expressed by the skin glands.

It localises to the secreted. In terms of biological role, antimicrobial peptide. Active against the Gram-positive bacteria S.aureus FDA209P (MIC=9.8 ug/ml) and B.subtilis ATCC 6633 (MIC&gt;64 ug/ml), and the Gram-negative bacteria E.coli O111 (MIC=19.6 ug/ml) and E.coli ATCC 25922 (MIC=9.8 ug/ml). Not active against the fungus C.albicans. The polypeptide is Brevinin-2GHc (Sylvirana guentheri (Gunther's frog)).